The chain runs to 235 residues: MKTVLDVLKGKLIVSCQALENEPLHSPFIMSRMALAAAQGGAAAIRANSVVDIAAIKQQVSLPVIGIIKRDYPGSEVFITATLKEIDELMTVNPEIIALDATARPRPNGQTLESFVGQIRARYPSVLLMADIATLAEAKEAQALGFDCVGTTLYGYTAETQGHSLPENDCEFLRDVVAAVSIPVVAEGNVDTPERAARCLALGAHTVVVGGAITRPQQITTRFVAAIEAHSIDRA.

It belongs to the NanE family.

The enzyme catalyses an N-acyl-D-glucosamine 6-phosphate = an N-acyl-D-mannosamine 6-phosphate. The protein operates within amino-sugar metabolism; N-acetylneuraminate degradation; D-fructose 6-phosphate from N-acetylneuraminate: step 3/5. Functionally, converts N-acetylmannosamine-6-phosphate (ManNAc-6-P) to N-acetylglucosamine-6-phosphate (GlcNAc-6-P). This is Putative N-acetylmannosamine-6-phosphate 2-epimerase from Enterobacter sp. (strain 638).